Reading from the N-terminus, the 384-residue chain is Spermidine/putrescine import ATP-binding protein PotA (384 aa).

Positions 6 to 238 constitute an ABC transporter domain; the sequence is IAFQNVSKVF…PINHFVATFI (233 aa). Position 40–47 (40–47) interacts with ATP; it reads GASGSGKS.

The protein belongs to the ABC transporter superfamily. Spermidine/putrescine importer (TC 3.A.1.11.1) family. As to quaternary structure, the complex is composed of two ATP-binding proteins (PotA), two transmembrane proteins (PotB and PotC) and a solute-binding protein (PotD).

The protein localises to the cell membrane. It carries out the reaction ATP + H2O + polyamine-[polyamine-binding protein]Side 1 = ADP + phosphate + polyamineSide 2 + [polyamine-binding protein]Side 1.. Its function is as follows. Part of the ABC transporter complex PotABCD involved in spermidine/putrescine import. Responsible for energy coupling to the transport system. The protein is Spermidine/putrescine import ATP-binding protein PotA of Streptococcus thermophilus (strain ATCC BAA-250 / LMG 18311).